A 153-amino-acid chain; its full sequence is 3-hydroxyacyl-[acyl-carrier-protein] dehydratase FabZ (153 aa).

The active site involves His58.

The protein belongs to the thioester dehydratase family. FabZ subfamily.

It is found in the cytoplasm. It carries out the reaction a (3R)-hydroxyacyl-[ACP] = a (2E)-enoyl-[ACP] + H2O. Involved in unsaturated fatty acids biosynthesis. Catalyzes the dehydration of short chain beta-hydroxyacyl-ACPs and long chain saturated and unsaturated beta-hydroxyacyl-ACPs. This chain is 3-hydroxyacyl-[acyl-carrier-protein] dehydratase FabZ, found in Bradyrhizobium diazoefficiens (strain JCM 10833 / BCRC 13528 / IAM 13628 / NBRC 14792 / USDA 110).